The primary structure comprises 531 residues: High-affinity glucose transporter ght2 (531 aa).

Over 5–13 (RGKNFTLVM) the chain is Cytoplasmic. Residues 14–34 (LIFVSMAGWMFGADTGSIGGV) traverse the membrane as a helical segment. Residues 35–62 (TSMRDFRERYADRYDPITDQYSLSSARQ) are Extracellular-facing. The chain crosses the membrane as a helical span at residues 63–83 (GLLTGMVNVGSLFGCIISSPI). The Cytoplasmic portion of the chain corresponds to 84 to 91 (ADRFGKRL). A helical transmembrane segment spans residues 92–112 (SIIGFCAVYIIGIIVQVTAVP). The Extracellular segment spans residues 113-116 (SWVQ). A helical membrane pass occupies residues 117–137 (IMVAKIWTGIGIGALSVLAPG). Residues 138–148 (YQSETAPPSIR) lie on the Cytoplasmic side of the membrane. The helical transmembrane segment at 149–169 (GTVVVTYQLFVTGGIFIAACI) threads the bilayer. The Extracellular portion of the chain corresponds to 170 to 183 (NMGTHKLHKTAQWR). Residues 184–204 (VSIGINLLWGIITMIGILFLP) form a helical membrane-spanning segment. At 205 to 270 (ESPRYLIQVG…IFGKDIRYRT (66 aa)) the chain is on the cytoplasmic side. A helical membrane pass occupies residues 271–289 (FLGMFVMSLQQLTGNNYFF). Over 290–305 (YYGFSVMQGAGINSPY) the chain is Extracellular. A helical transmembrane segment spans residues 306–326 (LSAMILDAVNFGCTFGGMYVL). Topologically, residues 327–332 (ERFGRR) are cytoplasmic. A helical transmembrane segment spans residues 333–353 (NPLIIGGIWQSICFFIYSAVG). Topologically, residues 354–367 (SRALYHKNGTSNTR) are extracellular. A glycan (N-linked (GlcNAc...) asparagine) is linked at Asn361. The helical transmembrane segment at 368 to 388 (AGAVMIVMACLFIFGFAQTWA) threads the bilayer. The Cytoplasmic segment spans residues 389 to 408 (PAAYVIVGESYPVRYRSKCA). Residues 409–429 (AVATASNWLWNFLISFFTPFI) traverse the membrane as a helical segment. The Extracellular portion of the chain corresponds to 430 to 436 (QASIGFK). The chain crosses the membrane as a helical span at residues 437 to 457 (YGYVFASCNLTGAIVIFLFAK). Over 458-531 (ETKGLTLEEI…QYSSHEEDYA (74 aa)) the chain is Cytoplasmic. Residues 491–531 (KKVEKEKSRKGGARGESVEYVERASNTDSSPQYSSHEEDYA) are disordered. Ser507, Ser515, Ser519, and Ser520 each carry phosphoserine. Positions 514–524 (ASNTDSSPQYS) are enriched in polar residues. At Tyr523 the chain carries Phosphotyrosine.

The protein belongs to the major facilitator superfamily. Sugar transporter (TC 2.A.1.1) family.

Its subcellular location is the membrane. High-affinity glucose transporter. In Schizosaccharomyces pombe (strain 972 / ATCC 24843) (Fission yeast), this protein is High-affinity glucose transporter ght2 (ght2).